The primary structure comprises 299 residues: UDP-N-acetylenolpyruvoylglucosamine reductase (299 aa).

The 166-residue stretch at 26–191 (GIGGPAKYFV…VSATFQLNAS (166 aa)) folds into the FAD-binding PCMH-type domain. Arg170 is an active-site residue. Residue Cys218 is the Proton donor of the active site. Glu288 is a catalytic residue.

The protein belongs to the MurB family. It depends on FAD as a cofactor.

It localises to the cytoplasm. The catalysed reaction is UDP-N-acetyl-alpha-D-muramate + NADP(+) = UDP-N-acetyl-3-O-(1-carboxyvinyl)-alpha-D-glucosamine + NADPH + H(+). The protein operates within cell wall biogenesis; peptidoglycan biosynthesis. Cell wall formation. This is UDP-N-acetylenolpyruvoylglucosamine reductase from Protochlamydia amoebophila (strain UWE25).